We begin with the raw amino-acid sequence, 204 residues long: CASP-like protein 4B4 (204 aa).

At 1-60 the chain is on the cytoplasmic side; the sequence is MSAAVAASSGAPAADVEKGAAAADANVDGGGAPAAAAASGEGVVSAVVRRWRRQDLLEKS. The helical transmembrane segment at 61-81 threads the bilayer; the sequence is GSALRVAAWAFSLLAFVVMGA. The Extracellular portion of the chain corresponds to 82 to 98; sequence NDHGDWRQFEHYEEYRY. Residues 99-119 form a helical membrane-spanning segment; sequence VVAIGVLAFIYTTLQLVRHGV. The Cytoplasmic segment spans residues 120 to 130; that stretch reads RLTGGQDLQGK. The chain crosses the membrane as a helical span at residues 131–151; that stretch reads VAVLVDFAGDQVTAYLLMSAV. Residues 152–175 lie on the Extracellular side of the membrane; sequence SAAIPITNRMREGADNVFTDSSAA. A helical membrane pass occupies residues 176 to 196; that stretch reads SISMAFFAFLCLALSALVSGF. The Cytoplasmic portion of the chain corresponds to 197–204; sequence KLAKQTYI.

The protein belongs to the Casparian strip membrane proteins (CASP) family. Homodimer and heterodimers.

The protein resides in the cell membrane. This is CASP-like protein 4B4 from Oryza sativa subsp. japonica (Rice).